Here is a 188-residue protein sequence, read N- to C-terminus: Kininogen (188 aa).

N-linked (GlcNAc...) asparagine glycosylation is found at N36, N150, and N182.

Post-translationally, bradykinin is released from kininogen by kallikrein. In terms of processing, N-glycosylated. Contains O-acetylated sialic acids as terminal elements on biantennary and triantennary N-glycans.

Inhibits papain and ficin (cysteine proteinases) but not trypsin (a serine proteinase). The polypeptide is Kininogen (Anarhichas minor (Arctic spotted wolffish)).